The primary structure comprises 328 residues: DNA polymerase III subunit delta' (328 aa).

In terms of assembly, DNA polymerase III contains a core (composed of alpha, epsilon and theta chains) that associates with a tau subunit. This core dimerizes to form the POLIII' complex. PolIII' associates with the gamma complex (composed of gamma, delta, delta', psi and chi chains) and with the beta chain to form the complete DNA polymerase III complex.

It carries out the reaction DNA(n) + a 2'-deoxyribonucleoside 5'-triphosphate = DNA(n+1) + diphosphate. In terms of biological role, DNA polymerase III is a complex, multichain enzyme responsible for most of the replicative synthesis in bacteria. This DNA polymerase also exhibits 3' to 5' exonuclease activity. This Pseudomonas aeruginosa (strain ATCC 15692 / DSM 22644 / CIP 104116 / JCM 14847 / LMG 12228 / 1C / PRS 101 / PAO1) protein is DNA polymerase III subunit delta' (holB).